Consider the following 339-residue polypeptide: Very-long-chain 3-oxoacyl-CoA reductase (339 aa).

The chain crosses the membrane as a helical span at residues 19-39; it reads VALFLLSIGGLFTACKLFSFC. Residues Leu-64, Lys-105, Asp-119, Asp-127, Asn-146, Tyr-213, Lys-217, Val-246, and Ser-248 each coordinate NADP(+). Tyr-213 (proton donor) is an active-site residue. Catalysis depends on Lys-217, which acts as the Lowers pKa of active site Tyr.

Belongs to the short-chain dehydrogenases/reductases (SDR) family.

The protein resides in the endoplasmic reticulum membrane. It catalyses the reaction a very-long-chain (3R)-3-hydroxyacyl-CoA + NADP(+) = a very-long-chain 3-oxoacyl-CoA + NADPH + H(+). It functions in the pathway lipid metabolism; fatty acid biosynthesis. In terms of biological role, component of the microsomal membrane bound fatty acid elongation system, which produces the 26-carbon very long-chain fatty acids (VLCFA) from palmitate. Catalyzes the reduction of the 3-ketoacyl-CoA intermediate that is formed in each cycle of fatty acid elongation. VLCFAs serve as precursors for ceramide and sphingolipids. This is Very-long-chain 3-oxoacyl-CoA reductase from Ajellomyces capsulatus (strain NAm1 / WU24) (Darling's disease fungus).